A 382-amino-acid polypeptide reads, in one-letter code: tRNA (guanine(26)-N(2))-dimethyltransferase (382 aa).

Positions 4–370 constitute a Trm1 methyltransferase domain; it reads TEVIEGKARL…REFSEILECV (367 aa). R44, R69, D87, D113, and A114 together coordinate S-adenosyl-L-methionine. Zn(2+) contacts are provided by C244, C247, C261, and C264.

Belongs to the class I-like SAM-binding methyltransferase superfamily. Trm1 family.

The catalysed reaction is guanosine(26) in tRNA + 2 S-adenosyl-L-methionine = N(2)-dimethylguanosine(26) in tRNA + 2 S-adenosyl-L-homocysteine + 2 H(+). Functionally, dimethylates a single guanine residue at position 26 of a number of tRNAs using S-adenosyl-L-methionine as donor of the methyl groups. This is tRNA (guanine(26)-N(2))-dimethyltransferase from Metallosphaera sedula (strain ATCC 51363 / DSM 5348 / JCM 9185 / NBRC 15509 / TH2).